A 677-amino-acid polypeptide reads, in one-letter code: Methionine--tRNA ligase (677 aa).

Positions 15–25 match the 'HIGH' region motif; sequence PYANGSIHLGH. Cysteine 146, cysteine 149, cysteine 159, and cysteine 162 together coordinate Zn(2+). The 'KMSKS' region signature appears at 333–337; it reads KMSKS. Lysine 336 provides a ligand contact to ATP. The region spanning 575-677 is the tRNA-binding domain; the sequence is DFAKVDLRVA…EGAKPGQQVK (103 aa).

This sequence belongs to the class-I aminoacyl-tRNA synthetase family. MetG type 1 subfamily. As to quaternary structure, homodimer. Zn(2+) is required as a cofactor.

Its subcellular location is the cytoplasm. The catalysed reaction is tRNA(Met) + L-methionine + ATP = L-methionyl-tRNA(Met) + AMP + diphosphate. In terms of biological role, is required not only for elongation of protein synthesis but also for the initiation of all mRNA translation through initiator tRNA(fMet) aminoacylation. The polypeptide is Methionine--tRNA ligase (Enterobacter sp. (strain 638)).